The primary structure comprises 179 residues: Large ribosomal subunit protein uL5 (179 aa).

It belongs to the universal ribosomal protein uL5 family. In terms of assembly, part of the 50S ribosomal subunit; part of the 5S rRNA/L5/L18/L25 subcomplex. Contacts the 5S rRNA and the P site tRNA. Forms a bridge to the 30S subunit in the 70S ribosome.

Functionally, this is one of the proteins that bind and probably mediate the attachment of the 5S RNA into the large ribosomal subunit, where it forms part of the central protuberance. In the 70S ribosome it contacts protein S13 of the 30S subunit (bridge B1b), connecting the 2 subunits; this bridge is implicated in subunit movement. Contacts the P site tRNA; the 5S rRNA and some of its associated proteins might help stabilize positioning of ribosome-bound tRNAs. The polypeptide is Large ribosomal subunit protein uL5 (Geobacillus thermodenitrificans (strain NG80-2)).